A 261-amino-acid polypeptide reads, in one-letter code: GTP cyclohydrolase FolE2 (261 aa).

Belongs to the GTP cyclohydrolase IV family.

It carries out the reaction GTP + H2O = 7,8-dihydroneopterin 3'-triphosphate + formate + H(+). It participates in cofactor biosynthesis; 7,8-dihydroneopterin triphosphate biosynthesis; 7,8-dihydroneopterin triphosphate from GTP: step 1/1. In terms of biological role, converts GTP to 7,8-dihydroneopterin triphosphate. This Herminiimonas arsenicoxydans protein is GTP cyclohydrolase FolE2.